A 482-amino-acid polypeptide reads, in one-letter code: Chromosomal replication initiator protein DnaA (482 aa).

The domain I, interacts with DnaA modulators stretch occupies residues 1–71 (MKQSILFERV…TGLFQAEDPE (71 aa)). Positions 71–139 (EILKIEVLVR…ASFGSPLFGS (69 aa)) are domain II. The segment at 140 to 362 (PLDSRFTFDT…GAFNQLVFRR (223 aa)) is domain III, AAA+ region. ATP contacts are provided by Gly-186, Gly-188, Lys-189, and Thr-190. Residues 363–482 (SFEPNLSIER…VELLKRLINE (120 aa)) are domain IV, binds dsDNA.

Belongs to the DnaA family. Oligomerizes as a right-handed, spiral filament on DNA at oriC.

It is found in the cytoplasm. In terms of biological role, plays an essential role in the initiation and regulation of chromosomal replication. ATP-DnaA binds to the origin of replication (oriC) to initiate formation of the DNA replication initiation complex once per cell cycle. Binds the DnaA box (a 9 base pair repeat at the origin) and separates the double-stranded (ds)DNA. Forms a right-handed helical filament on oriC DNA; dsDNA binds to the exterior of the filament while single-stranded (ss)DNA is stabiized in the filament's interior. The ATP-DnaA-oriC complex binds and stabilizes one strand of the AT-rich DNA unwinding element (DUE), permitting loading of DNA polymerase. After initiation quickly degrades to an ADP-DnaA complex that is not apt for DNA replication. Binds acidic phospholipids. The protein is Chromosomal replication initiator protein DnaA of Rhizobium johnstonii (strain DSM 114642 / LMG 32736 / 3841) (Rhizobium leguminosarum bv. viciae).